Reading from the N-terminus, the 373-residue chain is Chorismate synthase (373 aa).

Residues Arg48 and Arg54 each contribute to the NADP(+) site. FMN is bound by residues 125–127 (RSS), 248–249 (NA), Gly288, 303–307 (KPTSS), and Arg329.

The protein belongs to the chorismate synthase family. Homotetramer. FMNH2 is required as a cofactor.

It carries out the reaction 5-O-(1-carboxyvinyl)-3-phosphoshikimate = chorismate + phosphate. Its pathway is metabolic intermediate biosynthesis; chorismate biosynthesis; chorismate from D-erythrose 4-phosphate and phosphoenolpyruvate: step 7/7. In terms of biological role, catalyzes the anti-1,4-elimination of the C-3 phosphate and the C-6 proR hydrogen from 5-enolpyruvylshikimate-3-phosphate (EPSP) to yield chorismate, which is the branch point compound that serves as the starting substrate for the three terminal pathways of aromatic amino acid biosynthesis. This reaction introduces a second double bond into the aromatic ring system. The polypeptide is Chorismate synthase (Colwellia psychrerythraea (strain 34H / ATCC BAA-681) (Vibrio psychroerythus)).